The sequence spans 362 residues: 45 kDa calcium-binding protein (362 aa).

An N-terminal signal peptide occupies residues 1-36 (MVWPWVAMASRWGPLIGLAPCCLWLLGAVLLMDASA). A glycan (N-linked (GlcNAc...) asparagine) is linked at Asn-40. EF-hand domains follow at residues 98 to 133 (RSRR…KTAE) and 137 to 172 (EAME…SKGH). The residue at position 99 (Ser-99) is a Phosphoserine. Asp-111, Asn-113, Asp-115, Lys-117, Glu-122, Asp-150, Asp-152, Asp-154, His-156, and Glu-161 together coordinate Ca(2+). Thr-193 bears the Phosphothreonine mark. EF-hand domains lie at 197–232 (LENL…HSRG), 233–268 (MLRF…TVEN), 278–313 (WVKD…MNEY), and 314–349 (NALN…FTGS). Asp-213 contributes to the Ca(2+) binding site. The residue at position 217 (Thr-217) is a Phosphothreonine. Residues Glu-220, Asp-246, Asp-248, Asp-250, Gln-252, and Glu-257 each coordinate Ca(2+). Position 265 is a phosphothreonine (Thr-265). Residues Asp-291, Asn-293, and Asp-295 each contribute to the Ca(2+) site. A Phosphothreonine modification is found at Thr-299. Residues Glu-302, Asp-327, Asn-329, Asn-331, His-333, and Glu-338 each contribute to the Ca(2+) site. Residues 309–362 (PMNEYNALNEAKQMIAVADENQNHHLEPEEVLKYSEFFTGSKLVDYARSVHEEF) are necessary for intracellular retention in Golgi apparatus lumen.

This sequence belongs to the CREC family. In terms of assembly, isoform 5 interacts with STXBP1; the interaction is enhanced in presence of calcium. Isoform 5 interacts with STX3. Ubiquitous. Isoform 5 is expressed in pancreas.

Its subcellular location is the golgi apparatus lumen. The protein resides in the cytoplasm. The protein localises to the cell membrane. It localises to the cell projection. It is found in the bleb. May regulate calcium-dependent activities in the endoplasmic reticulum lumen or post-ER compartment. In terms of biological role, isoform 5 may be involved in the exocytosis of zymogens by pancreatic acini. This chain is 45 kDa calcium-binding protein (SDF4), found in Homo sapiens (Human).